Here is a 445-residue protein sequence, read N- to C-terminus: 3-phosphoshikimate 1-carboxyvinyltransferase (445 aa).

The disordered stretch occupies residues methionine 1 to valine 24. Polar residues predominate over residues leucine 7–isoleucine 22. The 3-phosphoshikimate site is built by lysine 28, serine 29, and arginine 33. Lysine 28 is a binding site for phosphoenolpyruvate. Residues glycine 101 and arginine 129 each contribute to the phosphoenolpyruvate site. 4 residues coordinate 3-phosphoshikimate: serine 174, glutamine 176, aspartate 326, and lysine 353. Residue glutamine 176 coordinates phosphoenolpyruvate. Catalysis depends on aspartate 326, which acts as the Proton acceptor. 2 residues coordinate phosphoenolpyruvate: arginine 357 and arginine 399.

This sequence belongs to the EPSP synthase family. Monomer.

Its subcellular location is the cytoplasm. The catalysed reaction is 3-phosphoshikimate + phosphoenolpyruvate = 5-O-(1-carboxyvinyl)-3-phosphoshikimate + phosphate. It participates in metabolic intermediate biosynthesis; chorismate biosynthesis; chorismate from D-erythrose 4-phosphate and phosphoenolpyruvate: step 6/7. Catalyzes the transfer of the enolpyruvyl moiety of phosphoenolpyruvate (PEP) to the 5-hydroxyl of shikimate-3-phosphate (S3P) to produce enolpyruvyl shikimate-3-phosphate and inorganic phosphate. The chain is 3-phosphoshikimate 1-carboxyvinyltransferase from Acidiphilium cryptum (strain JF-5).